We begin with the raw amino-acid sequence, 270 residues long: MAKVPDLFEDLKNCYSENEEYSSEIDHLTLNQKSFYDASYDPLHEDCTDKFMSPSTSETSKTPQLTLKKSVVMVAANGKILKKRRLSLNQFLTADDLEAIANEVEEEIMKPRSVAPNFYSSEKYNYQKIIKSQFILNDNLSQSVIRKAGGKYLAAAALQNLDDAVKFDMGAYTSKEDSKLPVTLRISKTRLFVSAQNEDEPVLLKEMPETPKTIRDETNLLFFWERHGSKNYFKSVAHPKLFIATQEEQLVHMARGLPSVTDFQILETQS.

Residues 1–112 (MAKVPDLFED…EVEEEIMKPR (112 aa)) constitute a propeptide that is removed on maturation. K82 is modified (N6-acetyllysine). Positions 82–86 (KKRRL) are nuclear localization signal (NLS). At S87 the chain carries Phosphoserine. N139 carries an N-linked (GlcNAc...) asparagine glycan.

Belongs to the IL-1 family. As to quaternary structure, monomer. Interacts with TMED10; the interaction mediates the translocation from the cytoplasm into the ERGIC (endoplasmic reticulum-Golgi intermediate compartment) and thereby secretion. Interacts with IL1R1. Interacts with S100A13; this interaction is the first step in the export of IL1A, followed by direct translocation of this complex across the plasma membrane. Post-translationally, acetylated within its nuclear localization sequence, which impacts subcellular localization. Proteolytic processed by CAPN1 in a calcium-dependent manner. Cleavage from 31 kDa precursor to 18 kDa biologically active molecules. In terms of processing, phosphorylated. Phosphorylation greatly enhances susceptibility to digestion and promotes the conversion of pre-IL1A alpha to the biologically active IL1A.

It is found in the nucleus. Its subcellular location is the cytoplasm. The protein localises to the secreted. Its function is as follows. Cytokine constitutively present intracellularly in nearly all resting non-hematopoietic cells that plays an important role in inflammation and bridges the innate and adaptive immune systems. After binding to its receptor IL1R1 together with its accessory protein IL1RAP, forms the high affinity interleukin-1 receptor complex. Signaling involves the recruitment of adapter molecules such as MYD88, IRAK1 or IRAK4. In turn, mediates the activation of NF-kappa-B and the three MAPK pathways p38, p42/p44 and JNK pathways. Within the cell, acts as an alarmin and cell death results in its liberation in the extracellular space after disruption of the cell membrane to induce inflammation and alert the host to injury or damage. In addition to its role as a danger signal, which occurs when the cytokine is passively released by cell necrosis, directly senses DNA damage and acts as signal for genotoxic stress without loss of cell integrity. The polypeptide is Interleukin-1 alpha (IL1A) (Felis catus (Cat)).